The sequence spans 421 residues: uncharacterized protein (421 aa).

Lys-249 is subject to N6-(pyridoxal phosphate)lysine.

The protein belongs to the class-I pyridoxal-phosphate-dependent aminotransferase family. Pyridoxal 5'-phosphate is required as a cofactor.

It localises to the cytoplasm. This is an uncharacterized protein from Schizosaccharomyces pombe (strain 972 / ATCC 24843) (Fission yeast).